The following is a 387-amino-acid chain: Carbamoyl phosphate synthase small chain (387 aa).

Positions 1–196 (MEGVLSQLAV…FSINKQKFLF (196 aa)) are CPSase. L-glutamine is bound by residues Ser-51, Gly-245, and Gly-247. The 188-residue stretch at 197–384 (HVVVYDFGVK…IKLIVSQKTT (188 aa)) folds into the Glutamine amidotransferase type-1 domain. Residue Cys-273 is the Nucleophile of the active site. L-glutamine contacts are provided by Leu-274, Gln-277, Asn-315, and Phe-318. Active-site residues include His-357 and Glu-359.

Belongs to the CarA family. As to quaternary structure, composed of two chains; the small (or glutamine) chain promotes the hydrolysis of glutamine to ammonia, which is used by the large (or ammonia) chain to synthesize carbamoyl phosphate. Tetramer of heterodimers (alpha,beta)4.

It carries out the reaction hydrogencarbonate + L-glutamine + 2 ATP + H2O = carbamoyl phosphate + L-glutamate + 2 ADP + phosphate + 2 H(+). The enzyme catalyses L-glutamine + H2O = L-glutamate + NH4(+). It participates in amino-acid biosynthesis; L-arginine biosynthesis; carbamoyl phosphate from bicarbonate: step 1/1. The protein operates within pyrimidine metabolism; UMP biosynthesis via de novo pathway; (S)-dihydroorotate from bicarbonate: step 1/3. Its function is as follows. Small subunit of the glutamine-dependent carbamoyl phosphate synthetase (CPSase). CPSase catalyzes the formation of carbamoyl phosphate from the ammonia moiety of glutamine, carbonate, and phosphate donated by ATP, constituting the first step of 2 biosynthetic pathways, one leading to arginine and/or urea and the other to pyrimidine nucleotides. The small subunit (glutamine amidotransferase) binds and cleaves glutamine to supply the large subunit with the substrate ammonia. This is Carbamoyl phosphate synthase small chain from Buchnera aphidicola subsp. Acyrthosiphon pisum (strain APS) (Acyrthosiphon pisum symbiotic bacterium).